The following is an 878-amino-acid chain: Fanconi-associated nuclease 1 homolog (878 aa).

The segment at 32–59 adopts a UBZ4-type zinc-finger fold; it reads GKTCPLCNIKFSLASYRSHMNVCKVADD. Zn(2+) contacts are provided by C35, C38, H50, and C54. A disordered region spans residues 88-180; it reads ENSGQEIPVN…QKSQSESQEA (93 aa). The segment covering 142 to 161 has biased composition (basic and acidic residues); sequence SEVRSVEKEIKKSPVWENRR. Over residues 168–179 the composition is skewed to low complexity; the sequence is QNSQKSQSESQE. 4 residues coordinate Mn(2+): E695, D823, E838, and V839. A VRR-NUC domain is found at 757–870; it reads QETIEDNIRR…GIKAEVCHVE (114 aa).

It belongs to the FAN1 family. Mn(2+) is required as a cofactor. It depends on Mg(2+) as a cofactor.

It is found in the nucleus. The enzyme catalyses Hydrolytically removes 5'-nucleotides successively from the 3'-hydroxy termini of 3'-hydroxy-terminated oligonucleotides.. Nuclease required for the repair of DNA interstrand cross-links (ICL). Acts as a 5'-3' exonuclease that anchors at a cut end of DNA and cleaves DNA successively at every third nucleotide, allowing to excise an ICL from one strand through flanking incisions. This chain is Fanconi-associated nuclease 1 homolog (fan-1), found in Caenorhabditis briggsae.